The following is an 820-amino-acid chain: Leucine--tRNA ligase (820 aa).

The 'HIGH' region motif lies at 40-51; that stretch reads PYPSGAGLHVGH. The short motif at 601 to 605 is the 'KMSKS' region element; sequence KMSKS. Lys-604 provides a ligand contact to ATP.

This sequence belongs to the class-I aminoacyl-tRNA synthetase family.

Its subcellular location is the cytoplasm. It catalyses the reaction tRNA(Leu) + L-leucine + ATP = L-leucyl-tRNA(Leu) + AMP + diphosphate. In Chlamydia pneumoniae (Chlamydophila pneumoniae), this protein is Leucine--tRNA ligase.